A 272-amino-acid polypeptide reads, in one-letter code: MPNVNPAPIGVFDSGLGGLSVLREIRALLPHESLLYLADSKYAPYGEKPEAFVQARTLQACEWLLAQGCKALVIACNTATGHAVELLRQTLPVPIIGVEPGLKPAAAASQSKVVGVLATANTLKSGKFARLLASLDGESRFICEAGLGLVPLIEQGDIDGPDIRGRLDNYLTPMLEAGADTLVLGCTHYPFLSDTIRDMVGNQLTLVDTGSAIARQLARKLVEHDLAVAPGAVPQDRFVSTKDAAHLRQMAAALLHIETQAETVAIEPAPAF.

Residues 13–14 (DS) and 45–46 (YG) contribute to the substrate site. C76 serves as the catalytic Proton donor/acceptor. 77–78 (NT) contributes to the substrate binding site. The active-site Proton donor/acceptor is C186. 187–188 (TH) is a substrate binding site.

It belongs to the aspartate/glutamate racemases family.

The catalysed reaction is L-glutamate = D-glutamate. The protein operates within cell wall biogenesis; peptidoglycan biosynthesis. Functionally, provides the (R)-glutamate required for cell wall biosynthesis. The polypeptide is Glutamate racemase (Cupriavidus pinatubonensis (strain JMP 134 / LMG 1197) (Cupriavidus necator (strain JMP 134))).